A 275-amino-acid polypeptide reads, in one-letter code: Formamidopyrimidine-DNA glycosylase (275 aa).

The active-site Schiff-base intermediate with DNA is the proline 2. Residue glutamate 3 is the Proton donor of the active site. Lysine 58 (proton donor; for beta-elimination activity) is an active-site residue. DNA is bound by residues histidine 91, arginine 109, and arginine 154. The FPG-type zinc finger occupies 240–274; it reads AVYERAGLPCRVCGTPIRRLVQGQRATYYCPSCQK. Arginine 264 acts as the Proton donor; for delta-elimination activity in catalysis.

Belongs to the FPG family. In terms of assembly, monomer. Zn(2+) serves as cofactor.

It catalyses the reaction Hydrolysis of DNA containing ring-opened 7-methylguanine residues, releasing 2,6-diamino-4-hydroxy-5-(N-methyl)formamidopyrimidine.. It carries out the reaction 2'-deoxyribonucleotide-(2'-deoxyribose 5'-phosphate)-2'-deoxyribonucleotide-DNA = a 3'-end 2'-deoxyribonucleotide-(2,3-dehydro-2,3-deoxyribose 5'-phosphate)-DNA + a 5'-end 5'-phospho-2'-deoxyribonucleoside-DNA + H(+). In terms of biological role, involved in base excision repair of DNA damaged by oxidation or by mutagenic agents. Acts as a DNA glycosylase that recognizes and removes damaged bases. Has a preference for oxidized purines, such as 7,8-dihydro-8-oxoguanine (8-oxoG). Has AP (apurinic/apyrimidinic) lyase activity and introduces nicks in the DNA strand. Cleaves the DNA backbone by beta-delta elimination to generate a single-strand break at the site of the removed base with both 3'- and 5'-phosphates. In Bordetella petrii (strain ATCC BAA-461 / DSM 12804 / CCUG 43448), this protein is Formamidopyrimidine-DNA glycosylase.